The following is a 366-amino-acid chain: tRNA/tmRNA (uracil-C(5))-methyltransferase (366 aa).

Q190, Y218, N223, E239, and D299 together coordinate S-adenosyl-L-methionine. C324 serves as the catalytic Nucleophile. The active-site Proton acceptor is the E358.

Belongs to the class I-like SAM-binding methyltransferase superfamily. RNA M5U methyltransferase family. TrmA subfamily.

The catalysed reaction is uridine(54) in tRNA + S-adenosyl-L-methionine = 5-methyluridine(54) in tRNA + S-adenosyl-L-homocysteine + H(+). It carries out the reaction uridine(341) in tmRNA + S-adenosyl-L-methionine = 5-methyluridine(341) in tmRNA + S-adenosyl-L-homocysteine + H(+). In terms of biological role, dual-specificity methyltransferase that catalyzes the formation of 5-methyluridine at position 54 (m5U54) in all tRNAs, and that of position 341 (m5U341) in tmRNA (transfer-mRNA). The protein is tRNA/tmRNA (uracil-C(5))-methyltransferase of Salmonella typhi.